The sequence spans 380 residues: Cell division protein FtsZ 2 (380 aa).

GTP contacts are provided by residues 47–51 (GAGNN), 134–136 (GTG), glutamate 165, arginine 168, and aspartate 211.

It belongs to the FtsZ family. In terms of assembly, homodimer. Polymerizes to form a dynamic ring structure in a strictly GTP-dependent manner. Interacts directly with several other division proteins.

It is found in the cytoplasm. Its function is as follows. Essential cell division protein that forms a contractile ring structure (Z ring) at the future cell division site. The regulation of the ring assembly controls the timing and the location of cell division. One of the functions of the FtsZ ring is to recruit other cell division proteins to the septum to produce a new cell wall between the dividing cells. Binds GTP and shows GTPase activity. The chain is Cell division protein FtsZ 2 from Methanocaldococcus jannaschii (strain ATCC 43067 / DSM 2661 / JAL-1 / JCM 10045 / NBRC 100440) (Methanococcus jannaschii).